The sequence spans 308 residues: Taste receptor type 2 member 41 (308 aa).

Over 1–6 (MLSTVS) the chain is Extracellular. A helical transmembrane segment spans residues 7–27 (VFFMSIFVLLCFLGILANGFI). Residues 28–60 (VLMLSREWLWRGRLLPSDMILLSLGTSRFCQQC) lie on the Cytoplasmic side of the membrane. A helical membrane pass occupies residues 61-81 (VGLVNSFYYSLHLVEYSRSLA). Residues 82–90 (RQLISLHMD) lie on the Extracellular side of the membrane. The helical transmembrane segment at 91–111 (FLNSATFWFGTWLSVLFCIKI) threads the bilayer. At 112 to 128 (ANFSHPAFLWLKWRFPA) the chain is on the cytoplasmic side. A helical transmembrane segment spans residues 129–149 (LVPWLLLGSILVSFIVTLMFF). At 150–184 (WGNHTVYQAFLRRKFSGNTTFKEWNRRLEIDYFMP) the chain is on the extracellular side. N152 and N167 each carry an N-linked (GlcNAc...) asparagine glycan. The chain crosses the membrane as a helical span at residues 185-205 (LKLVTTSIPCSLFLVSILLLI). Residues 206–239 (NSLRRHSQRMQHNAHSLQDPNTQAHSRALKSLIS) lie on the Cytoplasmic side of the membrane. The helical transmembrane segment at 240–260 (FLVLYALSYVSMVIDATVVIS) threads the bilayer. At 261-264 (SDNV) the chain is on the extracellular side. A helical membrane pass occupies residues 265–285 (WYWPWQIILYLCMSVHPFILI). At 286-308 (TNNLKFRGTFRQLLLLARGFWVT) the chain is on the cytoplasmic side.

It belongs to the G-protein coupled receptor T2R family. Expressed in subsets of taste receptor cells of the tongue and palate epithelium and exclusively in gustducin-positive cells. Expressed in 15% taste bud cells in circumvallate and foliate papillae but only in 2% in fungiform papillae. Expressed in the duodenum, antrum and fundus (part of the stomach).

The protein resides in the membrane. Its function is as follows. Receptor that may play a role in the perception of bitterness and is gustducin-linked. May play a role in sensing the chemical composition of the gastrointestinal content. The activity of this receptor may stimulate alpha gustducin, mediate PLC-beta-2 activation and lead to the gating of TRPM5. In Rattus norvegicus (Rat), this protein is Taste receptor type 2 member 41 (Tas2r41).